An 82-amino-acid chain; its full sequence is RNA-binding protein Hfq (82 aa).

Positions 11 to 71 constitute a Sm domain; the sequence is DTFLNHVRKT…ISTIMPGAPI (61 aa).

The protein belongs to the Hfq family. Homohexamer.

Functionally, RNA chaperone that binds small regulatory RNA (sRNAs) and mRNAs to facilitate mRNA translational regulation in response to envelope stress, environmental stress and changes in metabolite concentrations. Also binds with high specificity to tRNAs. This chain is RNA-binding protein Hfq, found in Bradyrhizobium sp. (strain BTAi1 / ATCC BAA-1182).